We begin with the raw amino-acid sequence, 191 residues long: Programmed cell death protein 6 (191 aa).

N-acetylalanine is present on Ala2. 5 consecutive EF-hand domains span residues 23–58 (PDQS…GTWT), 59–89 (PFNP…TGVW), 90–125 (KYIT…FGYR), 126–161 (LSDQ…LQRL), and 162–191 (TDIF…FSIV). Residues Asp36, Asp38, Ser40, Val42, and Glu47 each contribute to the Ca(2+) site. 5 residues coordinate Ca(2+): Asp103, Asp105, Ser107, Met109, and Glu114. The Mg(2+) site is built by Asp169, Asp171, Asp173, and Trp175.

Homodimer and heterodimer; heterodimerizes (via the EF-hand 5) with PEF1. Isoform 1 and isoform 2 self-associate; probably forming homodimers. Interacts with CPNE4 (via VWFA domain). Interacts with PDCD6IP; the interaction is calcium-dependent. Interacts with RBM22. Interacts with PLSCR4. Interacts with ANXA7 and TSG101. Interacts with DAPK1. Interacts with SEC31A; the interaction is calcium-dependent and promotes monoubiquitination of SEC31A. Interacts with ANXA11 (via N-terminus); the interaction is calcium-dependent. Interacts with PLSCR3 (via N-terminus); the interaction is calcium-dependent. Interacts with MCOLN1; the interaction is calcium-dependent. Interacts with KDR; the interaction is calcium-dependent. Interacts with HEBP2; the interaction is calcium-dependent. Interacts with TFG. Isoform 1: Interacts with SHISA5, leading to stabilize it. Isoform 2: Does not interact with SHISA5. Isoform 2: Does not interact with PDCD6IP, TSG101, ANXA7 and ANXA11.

The protein resides in the endoplasmic reticulum membrane. It is found in the cytoplasmic vesicle. Its subcellular location is the COPII-coated vesicle membrane. It localises to the cytoplasm. The protein localises to the nucleus. The protein resides in the endosome. Its function is as follows. Calcium sensor that plays a key role in processes such as endoplasmic reticulum (ER)-Golgi vesicular transport, endosomal biogenesis or membrane repair. Acts as an adapter that bridges unrelated proteins or stabilizes weak protein-protein complexes in response to calcium: calcium-binding triggers exposure of apolar surface, promoting interaction with different sets of proteins thanks to 3 different hydrophobic pockets, leading to translocation to membranes. Involved in ER-Golgi transport by promoting the association between PDCD6IP and TSG101, thereby bridging together the ESCRT-III and ESCRT-I complexes. Together with PEF1, acts as a calcium-dependent adapter for the BCR(KLHL12) complex, a complex involved in ER-Golgi transport by regulating the size of COPII coats. In response to cytosolic calcium increase, the heterodimer formed with PEF1 interacts with, and bridges together the BCR(KLHL12) complex and SEC31 (SEC31A or SEC31B), promoting monoubiquitination of SEC31 and subsequent collagen export, which is required for neural crest specification. Involved in the regulation of the distribution and function of MCOLN1 in the endosomal pathway. Promotes localization and polymerization of TFG at endoplasmic reticulum exit site. Required for T-cell receptor-, Fas-, and glucocorticoid-induced apoptosis. May mediate Ca(2+)-regulated signals along the death pathway: interaction with DAPK1 can accelerate apoptotic cell death by increasing caspase-3 activity. Its role in apoptosis may however be indirect, as suggested by knockout experiments. May inhibit KDR/VEGFR2-dependent angiogenesis; the function involves inhibition of VEGF-induced phosphorylation of the Akt signaling pathway. In case of infection by HIV-1 virus, indirectly inhibits HIV-1 production by affecting viral Gag expression and distribution. In terms of biological role, has a lower Ca(2+) affinity than isoform 1. In Homo sapiens (Human), this protein is Programmed cell death protein 6 (PDCD6).